A 483-amino-acid chain; its full sequence is Putative (R)-citramalate synthase CimA (483 aa).

In terms of domain architecture, Pyruvate carboxyltransferase spans 1–245; that stretch reads MRDGEQTPGV…DTGIKHEQIY (245 aa).

Belongs to the alpha-IPM synthase/homocitrate synthase family. As to quaternary structure, homodimer.

The catalysed reaction is pyruvate + acetyl-CoA + H2O = (3R)-citramalate + CoA + H(+). The protein operates within amino-acid biosynthesis; L-isoleucine biosynthesis; 2-oxobutanoate from pyruvate: step 1/3. Catalyzes the condensation of pyruvate and acetyl-coenzyme A to form (R)-citramalate. The chain is Putative (R)-citramalate synthase CimA from Methanosarcina mazei (strain ATCC BAA-159 / DSM 3647 / Goe1 / Go1 / JCM 11833 / OCM 88) (Methanosarcina frisia).